The sequence spans 123 residues: UPF0102 protein DR_2282 (123 aa).

The protein belongs to the UPF0102 family.

The polypeptide is UPF0102 protein DR_2282 (Deinococcus radiodurans (strain ATCC 13939 / DSM 20539 / JCM 16871 / CCUG 27074 / LMG 4051 / NBRC 15346 / NCIMB 9279 / VKM B-1422 / R1)).